The following is a 61-amino-acid chain: Type IV secretion system protein PtlI homolog (61 aa).

Residues 1-25 (MIHAHSNARLLRWAILAIAPATLGA) form the signal peptide. A disordered region spans residues 29–61 (NGPPGLPYPDGKPLIPINTAAPEQGSSCQTRAP). Residues 52–61 (QGSSCQTRAP) show a composition bias toward polar residues.

The chain is Type IV secretion system protein PtlI homolog (ptlI) from Bordetella bronchiseptica (strain ATCC BAA-588 / NCTC 13252 / RB50) (Alcaligenes bronchisepticus).